The chain runs to 465 residues: Clusterin-like protein 1 (465 aa).

A signal peptide spans 1–20 (MKPPILVFIVYLLQLRDCQC). Residues 62–107 (LMERREEEHSKLMRTLKKCREEKQEALKLMNEVQEHLEEEERLCQV) adopt a coiled-coil conformation. Intrachain disulfides connect C105/C333, C116/C325, C119/C322, C124/C315, and C131/C305. N-linked (GlcNAc...) asparagine glycans are attached at residues N196 and N257. The tract at residues 280–300 (LSKQDKDSAHGGPSSTTWPVR) is disordered. N-linked (GlcNAc...) asparagine glycans are attached at residues N311, N351, N412, and N430.

The protein belongs to the clusterin family.

The protein resides in the secreted. This is Clusterin-like protein 1 from Bos taurus (Bovine).